The sequence spans 185 residues: Bcl-2-like protein 10 (185 aa).

The short motif at leucine 76–glycine 95 is the BH1 element. The BH2 signature appears at tryptophan 138–cysteine 149. Residues phenylalanine 160 to tryptophan 182 traverse the membrane as a helical segment.

Belongs to the Bcl-2 family. As to quaternary structure, interacts with BAX. Interacts with BCL2, BCL2L1/BCLX. Interacts with APAF1. Interacts with ITPR1, ITPR2 and ITPR3; the interaction with ITPR1 is increased in the presence of AHCLY1. Interacts with AHCYL1. Interacts with HIP1R (via ENTH and I/LWEQ domains). Interacts with CASP9. Interacts with BCL2L11/BIM. Interacts with BIK. Interacts with UBQLN4. Interacts with NME2/NM23-H2. Interacts with and PMAIP1/NOXA. Interacts with TPX2. Interacts with UBQLN1; in the cytoplasm. Interacts (via BH1 domain) with BECN1. Ca(2+) is required as a cofactor. In terms of processing, monoubiquitinated by UBQLN1; results in stabilization of BCL2L10 protein abundance and in relocalization from mitochondria to cytoplasm. Expressed in oligodendroglial lineage cells.

The protein resides in the mitochondrion. It is found in the nucleus membrane. Its subcellular location is the endoplasmic reticulum. It localises to the cytoplasm. The protein localises to the cytoskeleton. The protein resides in the spindle. Functionally, promotes cell survival by suppressing apoptosis induced by BAX but not BAK. Increases binding of AHCYL1/IRBIT to ITPR1. Reduces ITPR1-mediated calcium release from the endoplasmic reticulum cooperatively with AHCYL1/IRBIT under normal cellular conditions. Under apoptotic stress conditions, dissociates from ITPR1 and is displaced from mitochondria-associated endoplasmic reticulum membranes, leading to increased Ca(2+) transfer to mitochondria which promotes apoptosis. Required for the correct formation of the microtubule organizing center during oocyte cell division, potentially via regulation of protein abundance and localization of other microtubule organizing center components such as AURKA and TPX2. The polypeptide is Bcl-2-like protein 10 (Rattus norvegicus (Rat)).